We begin with the raw amino-acid sequence, 436 residues long: tRNA(Ile)-lysidine synthase (436 aa).

25 to 30 (SGGLDS) lines the ATP pocket.

It belongs to the tRNA(Ile)-lysidine synthase family.

The protein resides in the cytoplasm. It carries out the reaction cytidine(34) in tRNA(Ile2) + L-lysine + ATP = lysidine(34) in tRNA(Ile2) + AMP + diphosphate + H(+). Its function is as follows. Ligates lysine onto the cytidine present at position 34 of the AUA codon-specific tRNA(Ile) that contains the anticodon CAU, in an ATP-dependent manner. Cytidine is converted to lysidine, thus changing the amino acid specificity of the tRNA from methionine to isoleucine. In Serratia proteamaculans (strain 568), this protein is tRNA(Ile)-lysidine synthase.